Reading from the N-terminus, the 305-residue chain is UDP-3-O-acyl-N-acetylglucosamine deacetylase (305 aa).

Zn(2+) is bound by residues His78, His237, and Asp241. Catalysis depends on His264, which acts as the Proton donor.

This sequence belongs to the LpxC family. Zn(2+) is required as a cofactor.

It catalyses the reaction a UDP-3-O-[(3R)-3-hydroxyacyl]-N-acetyl-alpha-D-glucosamine + H2O = a UDP-3-O-[(3R)-3-hydroxyacyl]-alpha-D-glucosamine + acetate. Its pathway is glycolipid biosynthesis; lipid IV(A) biosynthesis; lipid IV(A) from (3R)-3-hydroxytetradecanoyl-[acyl-carrier-protein] and UDP-N-acetyl-alpha-D-glucosamine: step 2/6. Functionally, catalyzes the hydrolysis of UDP-3-O-myristoyl-N-acetylglucosamine to form UDP-3-O-myristoylglucosamine and acetate, the committed step in lipid A biosynthesis. This Burkholderia mallei (strain NCTC 10247) protein is UDP-3-O-acyl-N-acetylglucosamine deacetylase.